A 986-amino-acid chain; its full sequence is Ephrin type-A receptor 4 (986 aa).

The signal sequence occupies residues 1-19 (MAGIFYFALFSCLFGICDA). The Extracellular portion of the chain corresponds to 20 to 547 (VTGSRVYPAN…RIIGDGANST (528 aa)). In terms of domain architecture, Eph LBD spans 30–209 (EVTLLDSRSV…FYKKCPLTVR (180 aa)). 3 N-linked (GlcNAc...) asparagine glycosylation sites follow: asparagine 235, asparagine 340, and asparagine 408. Fibronectin type-III domains lie at 328-439 (PPSA…TNQA) and 440-537 (APSS…TVPS). A glycan (N-linked (GlcNAc...) asparagine) is linked at asparagine 545. Residues 548–569 (VLLVSVSGSVVLVVILIAAFVI) form a helical membrane-spanning segment. The Cytoplasmic portion of the chain corresponds to 570–986 (SRRRSKYSKA…QQMHGRMVPV (417 aa)). Residues tyrosine 596 and tyrosine 602 each carry the phosphotyrosine; by autocatalysis modification. The Protein kinase domain maps to 621-882 (IKIEKVIGVG…QIVNMLDKLI (262 aa)). ATP is bound by residues 627–635 (IGVGEFGEV) and lysine 653. Catalysis depends on aspartate 746, which acts as the Proton acceptor. 2 positions are modified to phosphotyrosine; by autocatalysis: tyrosine 779 and tyrosine 928. Residues 911 to 975 (SAVVSVGDWL…LSSVQAMRTQ (65 aa)) enclose the SAM domain. The PDZ-binding motif lies at 984 to 986 (VPV).

Belongs to the protein kinase superfamily. Tyr protein kinase family. Ephrin receptor subfamily. Heterotetramer upon binding of the ligand. The heterotetramer is composed of an ephrin dimer and a receptor dimer. Oligomerization is probably required to induce biological responses. Interacts (phosphorylated at position Tyr-602) with FYN. Interacts with CDK5, CDK5R1 and NGEF; upon activation by EFNA1 induces NGEF phosphorylation by the kinase CDK5. Interacts with CHN1; effector of EPHA4 in axon guidance linking EPHA4 activation to RAC1 regulation. Interacts (via PDZ motif) with SIPA1L1 (via PDZ domain); controls neuronal morphology through regulation of the RAP1 (RAP1A or RAP1B) and RAP2 (RAP2A, RAP2B or RAP2C) GTPases. Forms a ternary complex composed of ADAM10, CADH1 and EPHA4; within the complex, CADH1 is cleaved by ADAM10 which disrupts adherens junctions. As to expression, ubiquitous.

It is found in the cell membrane. The protein resides in the cell projection. The protein localises to the axon. Its subcellular location is the dendrite. It localises to the postsynaptic density membrane. It is found in the early endosome. The protein resides in the cell junction. The protein localises to the adherens junction. It catalyses the reaction L-tyrosyl-[protein] + ATP = O-phospho-L-tyrosyl-[protein] + ADP + H(+). Its function is as follows. Receptor tyrosine kinase which binds membrane-bound ephrin family ligands residing on adjacent cells, leading to contact-dependent bidirectional signaling into neighboring cells. The signaling pathway downstream of the receptor is referred to as forward signaling while the signaling pathway downstream of the ephrin ligand is referred to as reverse signaling. Highly promiscuous, it has the unique property among Eph receptors to bind and to be physiologically activated by both GPI-anchored ephrin-A and transmembrane ephrin-B ligands including EFNA1 and EFNB3. Upon activation by ephrin ligands, modulates cell morphology and integrin-dependent cell adhesion through regulation of the Rac, Rap and Rho GTPases activity. Plays an important role in the development of the nervous system controlling different steps of axonal guidance including the establishment of the corticospinal projections. May also control the segregation of motor and sensory axons during neuromuscular circuit development. In addition to its role in axonal guidance plays a role in synaptic plasticity. Activated by EFNA1 phosphorylates CDK5 at 'Tyr-15' which in turn phosphorylates NGEF regulating RHOA and dendritic spine morphogenesis. In the nervous system, also plays a role in repair after injury preventing axonal regeneration and in angiogenesis playing a role in central nervous system vascular formation. Additionally, its promiscuity makes it available to participate in a variety of cell-cell signaling regulating for instance the development of the thymic epithelium. During development of the cochlear organ of Corti, regulates pillar cell separation by forming a ternary complex with ADAM10 and CADH1 which facilitates the cleavage of CADH1 by ADAM10 and disruption of adherens junctions. Phosphorylates CAPRIN1, promoting CAPRIN1-dependent formation of a membraneless compartment. The polypeptide is Ephrin type-A receptor 4 (EPHA4) (Homo sapiens (Human)).